The chain runs to 1256 residues: Nephrin (1256 aa).

Positions 1-35 (MGAKEATVRGPGASPVHRTCHLIPLLLAGMLTTGL) are cleaved as a signal peptide. Residues 36–1078 (AQSPVPTSAP…PGPPRLPLLP (1043 aa)) lie on the Extracellular side of the membrane. Ig-like C2-type domains are found at residues 39-144 (PVPT…VILS), 149-247 (PKVL…ASFT), 256-347 (PPVI…RSIT), 354-448 (PSAV…KSLT), 454-554 (PAQK…TQLV), and 558-649 (PPTN…ETVS). Asparagine 54 is a glycosylation site (N-linked (GlcNAc...) asparagine). Disulfide bonds link cysteine 67–cysteine 125, cysteine 174–cysteine 231, and cysteine 279–cysteine 331. 2 N-linked (GlcNAc...) asparagine glycosylation sites follow: asparagine 370 and asparagine 415. A disulfide bridge links cysteine 375 with cysteine 431. Serine 446 carries the phosphoserine modification. An intrachain disulfide couples cysteine 479 to cysteine 542. Positions 491–516 (TWLKDSRPVNDPRQSQEPRRVQLGSV) are disordered. Over residues 494–510 (KDSRPVNDPRQSQEPRR) the composition is skewed to basic and acidic residues. Asparagine 561, asparagine 578, asparagine 591, and asparagine 722 each carry an N-linked (GlcNAc...) asparagine glycan. Cysteine 581 and cysteine 637 are disulfide-bonded. Ig-like C2-type domains are found at residues 754–846 (PTIR…LVRL) and 852–953 (PQVD…VSIS). 2 disulfides stabilise this stretch: cysteine 775/cysteine 830 and cysteine 877/cysteine 934. The Fibronectin type-III domain occupies 957–1051 (PPLGLKVVSV…GIQVSITTPG (95 aa)). A disordered region spans residues 1048-1071 (TTPGLDQAPEDTDQPLPTEQPPGP). The chain crosses the membrane as a helical span at residues 1079–1099 (VLFAVGGLLLLSNASCVGGLL). Residues 1100 to 1256 (WRRRLRRLAE…LPFELRGHLV (157 aa)) lie on the Cytoplasmic side of the membrane. At serine 1112 the chain carries Phosphoserine. Basic and acidic residues predominate over residues 1112 to 1128 (SEKTEAGSEEDRIRNEY). The tract at residues 1112–1143 (SEKTEAGSEEDRIRNEYEESQWTGDRDTRSST) is disordered. At threonine 1115 the chain carries Phosphothreonine. Residue serine 1119 is modified to Phosphoserine. A Phosphotyrosine; by FYN modification is found at tyrosine 1208.

Belongs to the immunoglobulin superfamily. Interacts with NPHS2 and with CD2AP (via C-terminal domain). Interacts with MAGI1 (via PDZ 2 and 3 domains) forming a tripartite complex with IGSF5/JAM4. Forms a complex with ACTN4, CASK, IQGAP1, MAGI2, SPTAN1 and SPTBN1. Interacts with DDN; the interaction is direct. Self-associates (via the Ig-like domains). Also interacts (via the Ig-like domains) with KIRREL1 and KIRREL2; the interaction with KIRREL1 is dependent on KIRREL1 glycosylation. Interacts with KIRREL3. Interacts with phosphatidylinositol 3-kinase regulatory subunit PIK3R1; the interaction is reduced by high glucose levels. Post-translationally, phosphorylated at Tyr-1208 by FYN, leading to the recruitment and activation of phospholipase C-gamma-1/PLCG1. Tyrosine phosphorylation is reduced by high glucose levels. Dephosphorylated by tensin TNS2 which leads to reduced binding of NPHN1 to PIK3R1. Expressed in kidney glomeruli. In the embryo, expressed in the mesonephric kidney at 11 dpc with strong expression in cranial tubules with podocyte-like structures. Expression is observed in the podocytes of the developing kidney from 13 dpc. High expression is also detected in the developing cerebellum, hindbrain, spinal cord, retina and hypothalamus. Expressed in skeletal muscle during myoblast fusion such as in the adult following acute injury and in the embryo but not detected in uninjured adult skeletal muscle. Isoform 1 and isoform 2 are expressed in the newborn brain and developing cerebellum. Isoform 1 is the predominant isoform in adult kidney.

It localises to the cell membrane. Seems to play a role in the development or function of the kidney glomerular filtration barrier. Regulates glomerular vascular permeability. May anchor the podocyte slit diaphragm to the actin cytoskeleton. Plays a role in skeletal muscle formation through regulation of myoblast fusion. This is Nephrin (Nphs1) from Mus musculus (Mouse).